Reading from the N-terminus, the 343-residue chain is UDP-glucuronic acid decarboxylase 6 (343 aa).

The disordered stretch occupies residues 1–22 (MASNSSNGTTTTKPPPMPSPLR). Ala2 carries the post-translational modification N-acetylalanine. 62 to 87 (DNYFTGSKDNLKKWIGHPRFELIRHD) lines the NAD(+) pocket. A substrate-binding site is contributed by Arg171. Tyr174 functions as the Proton acceptor in the catalytic mechanism. 174-178 (YDEGK) contacts NAD(+). Asn203 serves as a coordination point for substrate. Residue Arg215 participates in NAD(+) binding. Substrate is bound by residues 216–220 (VVSNF), 233–240 (QKPGTQTR), and 300–304 (DPRQR).

This sequence belongs to the NAD(P)-dependent epimerase/dehydratase family. UDP-glucuronic acid decarboxylase subfamily. The cofactor is NAD(+).

The protein resides in the cytoplasm. The enzyme catalyses UDP-alpha-D-glucuronate + H(+) = UDP-alpha-D-xylose + CO2. Its pathway is nucleotide-sugar biosynthesis; UDP-alpha-D-xylose biosynthesis; UDP-alpha-D-xylose from UDP-alpha-D-glucuronate: step 1/1. Catalyzes the NAD-dependent decarboxylation of UDP-glucuronic acid to UDP-xylose. Necessary for the biosynthesis of the core tetrasaccharide in glycosaminoglycan biosynthesis. The chain is UDP-glucuronic acid decarboxylase 6 (UXS6) from Arabidopsis thaliana (Mouse-ear cress).